The chain runs to 4660 residues: Low-density lipoprotein receptor-related protein 2 (4660 aa).

The signal sequence occupies residues 1 to 25 (MERGAAAAAWMLLLAIAACLEPVSS). Residues 26–4425 (QECGSGNFRC…LSRGIPPGTT (4400 aa)) are Extracellular-facing. 6 consecutive LDL-receptor class A domains span residues 27–63 (ECGSGNFRCDNGYCIPASWRCDGTRDCLDDTDEIGCP), 66–104 (SCESGLFLCPAEGTCIPSSWVCDEDKDCSDGADEQQNCA), 107–143 (TCSAQQMTCSNGQCIPSEYRCDHVSDCPDGSDERNCH), 141–180 (NCHYPTCDQLTCANGACYNTSQRCDQKVDCRDSSDEANCT), 182–218 (LCSQKEFECGSGECILRAYVCDHDNDCEDNSDERNCN), and 221–257 (TCGGHQFTCSNGQCINQNWVCDGDDDCQDSGDEDGCE). Cystine bridges form between Cys28/Cys40, Cys35/Cys53, Cys47/Cys62, Cys67/Cys80, Cys74/Cys93, Cys87/Cys103, Cys108/Cys120, Cys115/Cys133, Cys127/Cys142, Cys142/Cys157, Cys152/Cys170, Cys164/Cys179, Cys183/Cys195, Cys190/Cys208, Cys202/Cys217, Cys222/Cys234, Cys229/Cys247, and Cys241/Cys256. Asn159 and Asn178 each carry an N-linked (GlcNAc...) asparagine glycan. A glycan (N-linked (GlcNAc...) asparagine) is linked at Asn259. The region spanning 264–307 (RCYPREWACPGSGRCISIDKVCDGVPDCPEGDDENNVTSGRTCG) is the LDL-receptor class A 7 domain. 3 cysteine pairs are disulfide-bonded: Cys265–Cys278, Cys272–Cys291, and Cys285–Cys306. N-linked (GlcNAc...) asparagine glycosylation is found at Asn299 and Asn340. An EGF-like 1; calcium-binding domain is found at 347-382 (DFDDCQIWGICDQKCENRQGRHQCLCEEGYILERGQ). 2 disulfides stabilise this stretch: Cys351/Cys361 and Cys357/Cys370. LDL-receptor class B repeat units follow at residues 435-477 (HRVF…DWIN), 478-520 (NKLY…DPTV), 521-567 (GYLF…DLVS), and 568-612 (KRVY…FEEH). An N-linked (GlcNAc...) asparagine glycan is attached at Asn462. Residue Asn657 is glycosylated (N-linked (GlcNAc...) asparagine). LDL-receptor class B repeat units follow at residues 752-794 (STVF…DWIS), 795-836 (RNLY…HPTA), 837-880 (GYMF…DWSA), and 881-924 (SRLY…FKDN). An N-linked (GlcNAc...) asparagine glycan is attached at Asn865. Residues 1024–1060 (QCGSLSFPCNNGKCVPSFFRCDGVDDCHDNSDEHQCG) enclose the LDL-receptor class A 8 domain. Cystine bridges form between Cys1025–Cys1037, Cys1032–Cys1050, and Cys1044–Cys1059. An N-linked (GlcNAc...) asparagine glycan is attached at Asn1063. LDL-receptor class A domains follow at residues 1065 to 1102 (TCSPSAFACVRGGQCIPGQWHCDRQNDCLDGSDEQNCP), 1109 to 1145 (TCPSTSFTCDNHVCIPKDWVCDTDNDCSDGSDEKNCQ), 1149 to 1185 (TCQPTQFRCPDHRCISPLYVCDGDKDCADGSDEAGCV), 1187 to 1224 (NCTSAQFKCADGSSCINSRYRCDGVYDCRDNSDEAGCP), 1230 to 1268 (MCHPDEFQCQGDGTCIPNTWECDGHPDCIHGSDEHTGCV), 1271 to 1307 (TCSPTHFLCDNGNCIYKAWICDGDNDCRDMSDEKDCP), and 1312 to 1350 (HCPSTQWQCPGYSTCINLSALCDGVFDCPNGTDESPLCN). Intrachain disulfides connect Cys1066/Cys1079, Cys1073/Cys1092, Cys1086/Cys1101, Cys1110/Cys1122, Cys1117/Cys1135, Cys1129/Cys1144, Cys1150/Cys1162, Cys1157/Cys1175, and Cys1169/Cys1184. Ca(2+) is bound by residues Trp1127, Asp1130, Asp1132, Asp1134, Asp1140, and Glu1141. Asn1187 is a glycosylation site (N-linked (GlcNAc...) asparagine). 18 disulfide bridges follow: Cys1188-Cys1201, Cys1195-Cys1214, Cys1208-Cys1223, Cys1231-Cys1244, Cys1238-Cys1257, Cys1251-Cys1267, Cys1272-Cys1284, Cys1279-Cys1297, Cys1291-Cys1306, Cys1313-Cys1326, Cys1320-Cys1339, Cys1333-Cys1349, Cys1354-Cys1365, Cys1361-Cys1374, Cys1376-Cys1389, Cys1395-Cys1405, Cys1401-Cys1414, and Cys1416-Cys1429. Ca(2+) is bound by residues Tyr1206, Asp1209, Val1211, Asp1213, Asp1219, and Glu1220. Asn1328 and Asn1341 each carry an N-linked (GlcNAc...) asparagine glycan. An EGF-like 2 domain is found at 1350 to 1390 (NQDSCSHFNGGCTHQCMQGPFGATCLCPLGYQLANDTKTCE). Asn1384 carries N-linked (GlcNAc...) asparagine glycosylation. The EGF-like 3; calcium-binding domain occupies 1391–1430 (DINECDIPGFCSQHCVNMRGSFRCACDPEYTLESDGRTCK). N-linked (GlcNAc...) asparagine glycans are attached at residues Asn1451, Asn1497, and Asn1551. LDL-receptor class B repeat units follow at residues 1479 to 1521 (GRVF…DWIG), 1522 to 1564 (RNLY…DPRM), 1567 to 1610 (NVMF…DYPN), 1611 to 1655 (RLIY…FEDF), and 1656 to 1696 (VYWT…IHPS). Asn1676, Asn1733, and Asn1811 each carry an N-linked (GlcNAc...) asparagine glycan. LDL-receptor class B repeat units lie at residues 1791-1833 (QFIY…DWVS), 1834-1883 (RNIY…DPAR), 1884-1931 (GKLY…DIQE), 1932-1973 (QKLY…YGSF), 1974-2014 (LYYS…YHRR), 2108-2157 (GFIY…DWAA), 2158-2202 (GNLY…DPKH), 2203-2246 (RYLF…DHDT), and 2247-2290 (GYIY…FGES). Asn2134, Asn2178, and Asn2225 each carry an N-linked (GlcNAc...) asparagine glycan. Asn2396 carries an N-linked (GlcNAc...) asparagine glycan. LDL-receptor class B repeat units lie at residues 2432–2478 (NRIF…DWIN), 2479–2519 (RRIY…DPCR), 2520–2563 (GYMY…DLET), 2564–2605 (DLLY…YGQY), and 2606–2647 (IYWT…VVKT). Residues Asn2488 and Asn2548 are each glycosylated (N-linked (GlcNAc...) asparagine). 10 consecutive LDL-receptor class A domains span residues 2700-2738 (RCNQLQFTCLNGHCINQDWKCDNDNDCGDGSDELPTVCA), 2741-2777 (TCRSTAFTCGNGRCVPYHYRCDYYNDCGDNSDEAGCL), 2780-2819 (NCNSTTEFTCSNGRCIPLSYVCNGINNCHDNDTSDEKNCP), 2822-2861 (TCPPDFTKCQTTNICVPRAFLCDGDNDCGDGSDENPIYCA), 2864-2902 (TCRSNEFQCLSPQRCIPSYWFCDGEADCADGSDEPDTCG), 2907-2946 (TCRASQFQCDNGRCISGNWVCDGDNDCGDMSDEDQRHHCE), 2949-2991 (NCSS…QNCT), 2994-3030 (TCSAGEFSCANGRCVRQSFRCDRRNDCGDYSDERGCS), 3033-3071 (PCHANQFTCQNGRCIPRFFVCDEDNDCGDGSDEQEHLCH), and 3076-3112 (TCPLHQFRCDNGHCIEMGRVCNHVDDCSDNSDEKGCG). Cystine bridges form between Cys2701-Cys2713, Cys2708-Cys2726, Cys2720-Cys2737, Cys2742-Cys2754, Cys2749-Cys2767, Cys2761-Cys2776, Cys2781-Cys2794, Cys2789-Cys2807, Cys2801-Cys2818, Cys2823-Cys2836, Cys2830-Cys2849, Cys2843-Cys2860, Cys2865-Cys2878, Cys2872-Cys2891, Cys2885-Cys2901, Cys2908-Cys2920, Cys2915-Cys2933, and Cys2927-Cys2945. Asn2782 is a glycosylation site (N-linked (GlcNAc...) asparagine). Asn2810 carries an N-linked (GlcNAc...) asparagine glycan. A glycan (N-linked (GlcNAc...) asparagine) is linked at Asn2949. Disulfide bonds link Cys2950–Cys2967, Cys2957–Cys2980, Cys2974–Cys2990, Cys2995–Cys3007, Cys3002–Cys3020, Cys3014–Cys3029, Cys3034–Cys3046, Cys3041–Cys3059, Cys3053–Cys3070, Cys3077–Cys3089, Cys3084–Cys3102, Cys3096–Cys3111, Cys3116–Cys3128, Cys3124–Cys3137, Cys3139–Cys3152, Cys3158–Cys3169, Cys3165–Cys3178, and Cys3180–Cys3193. Asn2989 carries an N-linked (GlcNAc...) asparagine glycan. The region spanning 3112 to 3153 (GINECLDSSISRCDHNCTDTITSFYCSCLPGYKLMSDKRSCV) is the EGF-like 4 domain. N-linked (GlcNAc...) asparagine glycosylation is present at Asn3127. One can recognise an EGF-like 5; calcium-binding domain in the interval 3154-3194 (DIDECKESPQLCSQKCENVVGSYICKCAPGYIREPDGKSCR). Residues Asn3213, Asn3259, Asn3317, and Asn3357 are each glycosylated (N-linked (GlcNAc...) asparagine). LDL-receptor class B repeat units follow at residues 3241–3283 (KRLY…DWVS), 3284–3326 (RKLY…EHPR), 3335–3378 (GHVY…DYTN), 3379–3421 (DLLY…FEDT), and 3422–3462 (VFWT…YHPY). Asn3448 is a glycosylation site (N-linked (GlcNAc...) asparagine). LDL-receptor class A domains lie at 3513-3551 (MCSSTQFLCGNNEKCIPIWWKCDGQKDCSDGSDEPDLCP), 3554-3592 (FCRLGQFQCRDGNCTSPQALCNARQDCADGSDEDRVLCE), 3595-3633 (RCESNEWQCANKRCIPQSWQCDSVNDCLDNSDEDTSHCA), 3636-3674 (TCRPGQFKCNNGRCIPQSWKCDVDNDCGDYSDEPIDECT), 3679-3717 (NCDNHTEFSCKTNYRCIPQWAVCNGFDDCRDNSDEQGCE), 3720-3757 (PCHPSGDFRCANHHCIPLRWKCDGTDDCGDNSDEENCV), 3760-3796 (ECSESEFRCADQQCIPSRWVCDQENDCGDNSDERDCE), and 3799-3835 (TCHPEHFQCTSGHCVPKALACDGRADCLDASDESACP). Intrachain disulfides connect Cys3514–Cys3527, Cys3521–Cys3540, Cys3534–Cys3550, Cys3555–Cys3567, Cys3562–Cys3580, Cys3574–Cys3591, Cys3596–Cys3608, Cys3603–Cys3621, Cys3615–Cys3632, Cys3637–Cys3649, Cys3644–Cys3662, Cys3656–Cys3673, Cys3680–Cys3694, Cys3688–Cys3707, Cys3701–Cys3716, Cys3721–Cys3734, Cys3729–Cys3747, Cys3741–Cys3756, Cys3761–Cys3773, Cys3768–Cys3786, Cys3780–Cys3795, Cys3800–Cys3812, Cys3807–Cys3825, and Cys3819–Cys3834. The N-linked (GlcNAc...) asparagine glycan is linked to Asn3566. Asn3682 carries N-linked (GlcNAc...) asparagine glycosylation. Residue Asn3840 is glycosylated (N-linked (GlcNAc...) asparagine). 3 LDL-receptor class A domains span residues 3843-3881 (YCPAAMFECKNHVCIQSFWICDGENDCVDGSDEEIHLCF), 3884-3923 (PCESPQRFRCDNSRCVYGHQLCNGVDDCGDGSDEKEEHCR), and 3929-3965 (PCTDTEYKCSNGNCISQHYVCDNVNDCGDLSDETGCN). 9 cysteine pairs are disulfide-bonded: Cys3844–Cys3856, Cys3851–Cys3869, Cys3863–Cys3880, Cys3885–Cys3898, Cys3893–Cys3911, Cys3905–Cys3922, Cys3930–Cys3942, Cys3937–Cys3955, and Cys3949–Cys3964. Residues 3968 to 4003 (DNRTCAENICEQNCTQLSSGGFICSCRPGFKPSTSD) form the EGF-like 6 domain. Residues Asn3969 and Asn3980 are each glycosylated (N-linked (GlcNAc...) asparagine). 5 cysteine pairs are disulfide-bonded: Cys3972–Cys3981, Cys3977–Cys3991, Cys4013–Cys4023, Cys4019–Cys4032, and Cys4034–Cys4049. One can recognise an EGF-like 7; calcium-binding domain in the interval 4009-4050 (DINECEEFGICPQSCRNSKGSYECFCVDGFKSMSTHYGERCA). Residue Asn4070 is glycosylated (N-linked (GlcNAc...) asparagine). LDL-receptor class B repeat units follow at residues 4156 to 4198 (RHIY…NPKL), 4199 to 4242 (GLMF…DYLN), and 4244 to 4285 (DRVY…FEDK). Residue Asn4329 is glycosylated (N-linked (GlcNAc...) asparagine). An EGF-like 8 domain is found at 4379 to 4413 (MPPPCRCMHGGNCYFDENELPKCKCSSGYSGEYCE). 3 cysteine pairs are disulfide-bonded: Cys4383/Cys4391, Cys4385/Cys4401, and Cys4403/Cys4412. A helical membrane pass occupies residues 4426–4446 (MAVLLTFVIVIIVGALVLVGL). Residues 4447-4660 (FHYRKTGSLL…ANLVKEDSDV (214 aa)) are Cytoplasmic-facing. The short motif at 4454–4463 (SLLPTLPKLP) is the SH3-binding element. The PxLPxI/L motif 1; mediates interaction with ANKRA2 signature appears at 4457–4462 (PTLPKL). Positions 4460–4465 (PKLPSL) match the PxLPxI/L motif 2; mediates interaction with ANKRA2 motif. Phosphoserine occurs at positions 4464 and 4467. Positions 4522-4527 (FENPMY) match the Endocytosis signal motif. The disordered stretch occupies residues 4559 to 4582 (NYGRPIDPSEIVPEPKPASPGADE). At Ser4577 the chain carries Phosphoserine. The tract at residues 4597–4610 (QTTNFENPIYAEMD) is interaction with DAB2. The NPXY motif signature appears at 4603 to 4606 (NPIY). The SH2-binding motif lies at 4606–4609 (YAEM). The disordered stretch occupies residues 4617–4660 (VAVAPPPSPSLPAKASKRNLTPGYTATEDTFKDTANLVKEDSDV). Residues 4619–4630 (VAPPPSPSLPAK) carry the SH3-binding motif. A Phosphoserine modification is found at Ser4624. The segment covering 4634 to 4644 (RNLTPGYTATE) has biased composition (polar residues). Position 4637 is a phosphothreonine (Thr4637). Ser4658 is subject to Phosphoserine.

This sequence belongs to the LDLR family. In terms of assembly, binds plasminogen, extracellular matrix components, plasminogen activator-plasminogen activator inhibitor type I complex, apolipoprotein E-enriched beta-VLDL, lipoprotein lipase, lactoferrin, CLU/clusterin and calcium. Forms a multimeric complex together with LRPAP1. Interacts (via PxLPxI/L motif) with ANKRA2 (via ankyrin repeats). Interacts with LRP2BP. Interacts (via NPXY motif) with DAB2; the interaction is not affected by tyrosine phosphorylation of the NPXY motif. Interacts with MB. Interacts with BMP4. Interacts with the Sonic hedgehog protein N-product which is the active product of SHH. Interacts with CST3 in a calcium-dependent manner. Interacts with the vitamin-D binding protein GC/DBP. Interacts with sex hormone-binding protein SHBG. Interacts with angiotensin-2. Also interacts with angiotensin 1-7. Interacts with APOM. Interacts with selenoprotein SEPP1. Interacts with LEP. Interacts with ALB. Interacts with the antiapoptotic protein BIRC5/survivin. Interacts with matrix metalloproteinase MMP2 in complex with metalloproteinase inhibitor TIMP1. In neurons, forms a trimeric complex with APP and APPB1/FE65. Interacts with LDLRAP1/ARH; mediates trafficking of LRP2 to the endocytic recycling compartment. Does not interact with beta-amyloid protein 40 alone but interacts with the complex composed of beta-amyloid protein 40 and CLU/APOJ. Interacts with MDK. A fraction undergoes proteolytic cleavage of the extracellular domain at the cell membrane to generate a cytoplasmic tail fragment. This is internalized into the early endosome from where it trafficks in an LDLRAP1/ARH-dependent manner to the endocytic recycling compartment (ERC). In the ERC, it is further cleaved by gamma-secretase to release a fragment which translocates to the nucleus and mediates transcriptional repression. In terms of processing, N-glycosylation is required for ligand binding. In terms of tissue distribution, in the inner ear, expressed in the lumen of the endolymphatic sac where it localizes to macrophage-like cells as well as to mitochondria-rich and ribosome-rich epithelial cells (at protein level). In the inner ear, expressed in marginal cells of the stria vascularis, epithelial cells at the spiral prominence, epithelial cells of Reissner's membrane facing the cochlear duct, and Kolliker's organ (at protein level). Expressed in the choroid plexus epithelium in the brain (at protein level). In the brain, also expressed in astrocytes (at protein level). Expression also detected in epithelial cells of the kidney glomerulus and proximal tubule, lung, epididymis and yolk sac.

The protein localises to the apical cell membrane. It is found in the endosome lumen. Its subcellular location is the membrane. It localises to the clathrin-coated pit. The protein resides in the cell projection. The protein localises to the dendrite. It is found in the axon. Multiligand endocytic receptor. Acts together with CUBN to mediate endocytosis of high-density lipoproteins. Mediates receptor-mediated uptake of polybasic drugs such as aprotinin, aminoglycosides and polymyxin B. In the kidney, mediates the tubular uptake and clearance of leptin. Also mediates transport of leptin across the blood-brain barrier through endocytosis at the choroid plexus epithelium. Endocytosis of leptin in neuronal cells is required for hypothalamic leptin signaling and leptin-mediated regulation of feeding and body weight. Mediates endocytosis and subsequent lysosomal degradation of CST3 in kidney proximal tubule cells. Mediates renal uptake of 25-hydroxyvitamin D3 in complex with the vitamin D3 transporter GC/DBP. Mediates renal uptake of metallothionein-bound heavy metals. Together with CUBN, mediates renal reabsorption of myoglobin. Mediates renal uptake and subsequent lysosomal degradation of APOM. Plays a role in kidney selenium homeostasis by mediating renal endocytosis of selenoprotein SEPP1. Mediates renal uptake of the antiapoptotic protein BIRC5/survivin which may be important for functional integrity of the kidney. Mediates renal uptake of matrix metalloproteinase MMP2 in complex with metalloproteinase inhibitor TIMP1. Mediates endocytosis of Sonic hedgehog protein N-product (ShhN), the active product of SHH. Also mediates ShhN transcytosis. In the embryonic neuroepithelium, mediates endocytic uptake and degradation of BMP4, is required for correct SHH localization in the ventral neural tube and plays a role in patterning of the ventral telencephalon. Required at the onset of neurulation to sequester SHH on the apical surface of neuroepithelial cells of the rostral diencephalon ventral midline and to control PTCH1-dependent uptake and intracellular trafficking of SHH. During neurulation, required in neuroepithelial cells for uptake of folate bound to the folate receptor FOLR1 which is necessary for neural tube closure. In the adult brain, negatively regulates BMP signaling in the subependymal zone which enables neurogenesis to proceed. In astrocytes, mediates endocytosis of ALB which is required for the synthesis of the neurotrophic factor oleic acid. Involved in neurite branching. During optic nerve development, required for SHH-mediated migration and proliferation of oligodendrocyte precursor cells. Mediates endocytic uptake and clearance of SHH in the retinal margin which protects retinal progenitor cells from mitogenic stimuli and keeps them quiescent. Plays a role in reproductive organ development by mediating uptake in reproductive tissues of androgen and estrogen bound to the sex hormone binding protein SHBG. Mediates endocytosis of angiotensin-2. Also mediates endocytosis of angiotensin 1-7. Binds to the complex composed of beta-amyloid protein 40 and CLU/APOJ and mediates its endocytosis and lysosomal degradation. Required for embryonic heart development. Required for normal hearing, possibly through interaction with estrogen in the inner ear. This Rattus norvegicus (Rat) protein is Low-density lipoprotein receptor-related protein 2 (Lrp2).